The following is a 426-amino-acid chain: Enolase 1 (426 aa).

Glutamine 162 provides a ligand contact to (2R)-2-phosphoglycerate. Catalysis depends on glutamate 204, which acts as the Proton donor. Residues aspartate 241, glutamate 284, and aspartate 311 each coordinate Mg(2+). (2R)-2-phosphoglycerate is bound by residues lysine 336, arginine 365, serine 366, and lysine 387. Catalysis depends on lysine 336, which acts as the Proton acceptor.

It belongs to the enolase family. It depends on Mg(2+) as a cofactor.

It localises to the cytoplasm. The protein localises to the secreted. It is found in the cell surface. It catalyses the reaction (2R)-2-phosphoglycerate = phosphoenolpyruvate + H2O. Its pathway is carbohydrate degradation; glycolysis; pyruvate from D-glyceraldehyde 3-phosphate: step 4/5. Functionally, catalyzes the reversible conversion of 2-phosphoglycerate (2-PG) into phosphoenolpyruvate (PEP). It is essential for the degradation of carbohydrates via glycolysis. This chain is Enolase 1, found in Methanospirillum hungatei JF-1 (strain ATCC 27890 / DSM 864 / NBRC 100397 / JF-1).